Reading from the N-terminus, the 75-residue chain is UPF0291 protein Teth39_0326 (75 aa).

This sequence belongs to the UPF0291 family.

It is found in the cytoplasm. The chain is UPF0291 protein Teth39_0326 from Thermoanaerobacter pseudethanolicus (strain ATCC 33223 / 39E) (Clostridium thermohydrosulfuricum).